We begin with the raw amino-acid sequence, 249 residues long: Proteasome subunit alpha type-4 (249 aa).

The protein belongs to the peptidase T1A family. In terms of assembly, the 26S proteasome consists of a 20S proteasome core and two 19S regulatory subunits. The 20S proteasome core is composed of 28 subunits that are arranged in four stacked rings, resulting in a barrel-shaped structure. The two end rings are each formed by seven alpha subunits, and the two central rings are each formed by seven beta subunits. The catalytic chamber with the active sites is on the inside of the barrel.

It localises to the cytoplasm. It is found in the nucleus. Functionally, the proteasome is a multicatalytic proteinase complex which is characterized by its ability to cleave peptides with Arg, Phe, Tyr, Leu, and Glu adjacent to the leaving group at neutral or slightly basic pH. The proteasome has an ATP-dependent proteolytic activity. The sequence is that of Proteasome subunit alpha type-4 (PAC1) from Petunia hybrida (Petunia).